The primary structure comprises 505 residues: Tyrosine-protein kinase isoform SRK1 (505 aa).

Polar residues-rich tracts occupy residues 1–10 (MGSCCSSQDG) and 18–31 (AGSTVDSHELSQSV). The segment at 1-53 (MGSCCSSQDGDGNGKATAGSTVDSHELSQSVKGKIKQPEPKPKPPPQVPPAQD) is disordered. The SH3 domain maps to 54 to 116 (VKYPIYVGKY…PSNYVAEYKS (63 aa)). Positions 122–214 (WFLGKIKRVE…GLCCKLLYPC (93 aa)) constitute an SH2 domain. The region spanning 240-493 (IKLLRRLGAG…TLQWQLEEFF (254 aa)) is the Protein kinase domain. ATP-binding positions include 246–254 (LGAGQFGEV) and K268. D359 (proton acceptor) is an active-site residue.

This sequence belongs to the protein kinase superfamily. Tyr protein kinase family. SRC subfamily.

It localises to the cytoplasm. It carries out the reaction L-tyrosyl-[protein] + ATP = O-phospho-L-tyrosyl-[protein] + ADP + H(+). This chain is Tyrosine-protein kinase isoform SRK1 (SRK1), found in Spongilla lacustris (Freshwater sponge).